The sequence spans 373 residues: Probable jasmonic acid carboxyl methyltransferase 2 (373 aa).

Tyr-18 contacts S-adenosyl-L-homocysteine. Gln-25 contributes to the jasmonate binding site. Residues Cys-59, Asn-64, Asp-96, Leu-97, Ser-135, and Phe-136 each contribute to the S-adenosyl-L-homocysteine site. Residues His-156 and Trp-157 each coordinate jasmonate. Residues Asn-174, Asp-260, Phe-262, and Asn-263 each coordinate Mg(2+).

This sequence belongs to the methyltransferase superfamily. Type-7 methyltransferase family. Requires Mg(2+) as cofactor.

It is found in the cytoplasm. It localises to the nucleus. The enzyme catalyses jasmonate + S-adenosyl-L-methionine = methyl (-)-jasmonate + S-adenosyl-L-homocysteine. Its pathway is lipid metabolism; oxylipin biosynthesis. Functionally, catalyzes the methylation of jasmonate into methyljasmonate, a plant volatile that acts as an important cellular regulator mediating diverse developmental processes and defense responses. The chain is Probable jasmonic acid carboxyl methyltransferase 2 from Theobroma cacao (Cacao).